The sequence spans 464 residues: Cysteine--tRNA ligase (464 aa).

Zn(2+) is bound at residue cysteine 30. The 'HIGH' region motif lies at 32–42 (MTVYDYCHIGH). Positions 214, 239, and 243 each coordinate Zn(2+). Positions 271–275 (KMSKS) match the 'KMSKS' region motif. Residue lysine 274 participates in ATP binding.

The protein belongs to the class-I aminoacyl-tRNA synthetase family. Monomer. Zn(2+) serves as cofactor.

The protein localises to the cytoplasm. The catalysed reaction is tRNA(Cys) + L-cysteine + ATP = L-cysteinyl-tRNA(Cys) + AMP + diphosphate. This is Cysteine--tRNA ligase from Janthinobacterium sp. (strain Marseille) (Minibacterium massiliensis).